Here is a 448-residue protein sequence, read N- to C-terminus: Death-associated protein kinase 3 (448 aa).

A Protein kinase domain is found at 13–275; that stretch reads YEMGEELGSG…IAQSLEHSWI (263 aa). ATP-binding positions include 19–27 and Lys42; that span reads LGSGQFAIV. Asp139 (proton acceptor) is an active-site residue. Residues 161 to 204 form an activation segment region; sequence DFGIAHRIEAGSEFKNIFGTPEFVAPEIVNYEPLGLEADMWSIG. Thr180 and Thr225 each carry phosphothreonine. Thr265 bears the Phosphothreonine; by autocatalysis mark. At Thr265 the chain carries Phosphothreonine; by ROCK1. A Phosphoserine; by DAPK1 modification is found at Ser304. Residue Ser306 is modified to Phosphoserine; by autocatalysis and DAPK1. Residues Ser307, Ser313, and Ser321 each carry the phosphoserine; by DAPK1 modification. Positions 390-448 are interaction with CDC5L; the sequence is AQEEARAALLGAGGLKRRLCRLENRYDALAAQVAAEVQFVRDLVRALEQERLQAECGVR. Positions 418–448 are required for interaction with ATF4 but not with PAWR; sequence LAAQVAAEVQFVRDLVRALEQERLQAECGVR. Residues 422-436 are leucine-zipper; it reads VAAEVQFVRDLVRAL.

It belongs to the protein kinase superfamily. CAMK Ser/Thr protein kinase family. DAP kinase subfamily. Homooligomer in its kinase-active form (homotrimers and homodimers are reported); monomeric in its kinase-inactive form. Homodimerization is required for activation segment autophosphorylation. Interacts with DAXX, ATF4, NLK, TCF7L2, UBE2D1, UBE2D2, UBE2D3 and CDC5L. Interacts with PAWR; also demonstrated in aorta smooth muscle cells indicative for the cytoskeletal targeting function of PAWR. Interacts with AR; enhanced by AATF. Interacts with LUZP1; the interaction is likely to occur throughout the cell cycle and reduces the LUZP1-mediated suppression of MYL9 phosphorylation. Mg(2+) is required as a cofactor. Post-translationally, ubiquitinated. Ubiquitination mediated by the UBE2D3 E3 ligase does not lead to proteasomal degradation, but influences promyelocytic leukemia protein nuclear bodies (PML-NBs) formation in the nucleus. In terms of processing, the phosphorylation status is critical for kinase activity, oligomerization and intracellular localization. Phosphorylation at Thr-180, Thr-225 and Thr-265 is essential for activity. The phosphorylated form is localized in the cytoplasm and nuclear translocation or retention is maximal when it is not phosphorylated. Phosphorylation increases the trimeric form, and its dephosphorylation favors a kinase-inactive monomeric form. As to expression, ubiquitously expressed in all tissue types examined. High levels in brain, heart, lung and spleen, lower expression in kidney, liver, skeletal muscle and testis. Isoform 2 is expressed in the smooth muscle.

The protein localises to the nucleus. Its subcellular location is the PML body. It localises to the cytoplasm. The protein resides in the cytoskeleton. It is found in the microtubule organizing center. The protein localises to the chromosome. Its subcellular location is the centromere. It localises to the spindle. The protein resides in the midbody. The catalysed reaction is L-seryl-[protein] + ATP = O-phospho-L-seryl-[protein] + ADP + H(+). It carries out the reaction L-threonyl-[protein] + ATP = O-phospho-L-threonyl-[protein] + ADP + H(+). With respect to regulation, a sequential activation is proposed: autophosphorylation at consensus sites is leading to dimerization of the catalytic domain and activation segment exchange (producing an active confirmation of both kinase modules in trans) followed by phosphorylation at Thr-180 in the activation segment and at other regulatory sites. Phosphorylation at Thr-180, Thr-225 and Thr-265 is essential for activity. Inhibited by pyridone 6 (K00225), a potent, ATP-competitive inhibitor. Phosphorylation at Thr-180, Thr-225 and Thr-265 is essential for activity. Serine/threonine kinase which is involved in the regulation of apoptosis, autophagy, transcription, translation and actin cytoskeleton reorganization. Regulates both type I (caspase-dependent) apoptotic and type II (caspase-independent) autophagic cell deaths signal, depending on the cellular setting. Involved in formation of promyelocytic leukemia protein nuclear body (PML-NB). Involved in apoptosis involving PAWR which mediates cytoplasmic relocation; in vitro phosphorylates PAWR. Regulates myosin phosphorylation in both smooth muscle and non-muscle cells. In smooth muscle, regulates myosin either directly by phosphorylating MYL12B and MYL9 or through inhibition of smooth muscle myosin phosphatase (SMPP1M) via phosphorylation of PPP1R12A; the inhibition of SMPP1M functions to enhance muscle responsiveness to Ca(2+) and promote a contractile state. Phosphorylates MYL12B in non-muscle cells leading to reorganization of actin cytoskeleton such as in regulation of cell polarity and cell migration. Positively regulates canonical Wnt/beta-catenin signaling through interaction with NLK and TCF7L2; disrupts the NLK-TCF7L2 complex thereby influencing the phosphorylation of TCF7L2 by NLK. Phosphorylates RPL13A on 'Ser-77' upon interferon-gamma activation which is causing RPL13A release from the ribosome, RPL13A association with the GAIT complex and its subsequent involvement in transcript-selective translation inhibition. Phosphorylates STAT3 and enhances its transcriptional activity. Enhances transcription from AR-responsive promoters in a hormone- and kinase-dependent manner. Phosphorylates histone H3 on 'Thr-11' at centromeres during mitosis. This is Death-associated protein kinase 3 (Dapk3) from Rattus norvegicus (Rat).